The chain runs to 291 residues: Mitochondrial citrate transporter B (291 aa).

Solcar repeat units follow at residues 10-97 (PQKW…IKNS), 105-193 (LSPA…LKES), and 201-283 (PTLF…MTYL). 6 consecutive transmembrane segments (helical) span residues 16–36 (LIAG…FEYA), 74–94 (STLI…YDTI), 112–132 (VAGV…TERI), 172–192 (TTLK…ILKE), 203–220 (LFTT…TVYA), and 255–276 (FWKG…VFSV).

It belongs to the mitochondrial carrier (TC 2.A.29) family.

Its subcellular location is the mitochondrion inner membrane. It catalyses the reaction citrate(in) + H(+)(in) = citrate(out) + H(+)(out). In terms of biological role, mitochondrial transporter that mediates citrate export from mitochondria to cytoplasm. Both ctpA, ctpB, and ctpD play important roles in citric acid transport across the mitochondrial membrane and function in a redundant manner. The protein is Mitochondrial citrate transporter B of Aspergillus niger (strain ATCC 1015 / CBS 113.46 / FGSC A1144 / LSHB Ac4 / NCTC 3858a / NRRL 328 / USDA 3528.7).